Here is a 377-residue protein sequence, read N- to C-terminus: UPF0754 membrane protein lwe2241 (377 aa).

2 consecutive transmembrane segments (helical) span residues 1-21 and 357-377; these read MSVL…GAMT and YLGG…AIWI.

The protein belongs to the UPF0754 family.

The protein resides in the cell membrane. The protein is UPF0754 membrane protein lwe2241 of Listeria welshimeri serovar 6b (strain ATCC 35897 / DSM 20650 / CCUG 15529 / CIP 8149 / NCTC 11857 / SLCC 5334 / V8).